The chain runs to 312 residues: Telomere-binding protein OPG077 (312 aa).

This sequence belongs to the orthopoxvirus OPG077 family.

Its subcellular location is the virion. Its function is as follows. DNA-binding protein which binds to the hairpin form of the viral telomeric sequence. Required for the production of mature virions (MV). The polypeptide is Telomere-binding protein OPG077 (OPG077) (Monkeypox virus).